The chain runs to 252 residues: 3-dehydroquinate dehydratase (252 aa).

Residues S21, 46–48 (EWR), and R82 contribute to the 3-dehydroquinate site. Catalysis depends on H143, which acts as the Proton donor/acceptor. The active-site Schiff-base intermediate with substrate is the K170. Residues R213, S232, and Q236 each coordinate 3-dehydroquinate.

Belongs to the type-I 3-dehydroquinase family. As to quaternary structure, homodimer.

The enzyme catalyses 3-dehydroquinate = 3-dehydroshikimate + H2O. It participates in metabolic intermediate biosynthesis; chorismate biosynthesis; chorismate from D-erythrose 4-phosphate and phosphoenolpyruvate: step 3/7. Functionally, involved in the third step of the chorismate pathway, which leads to the biosynthesis of aromatic amino acids. Catalyzes the cis-dehydration of 3-dehydroquinate (DHQ) and introduces the first double bond of the aromatic ring to yield 3-dehydroshikimate. The chain is 3-dehydroquinate dehydratase from Shigella dysenteriae.